The sequence spans 525 residues: Hydroxyneurosporene desaturase (525 aa).

Belongs to the carotenoid/retinoid oxidoreductase family.

The catalysed reaction is rhodopin + A = (3E)-3,4-didehydrorhodopin + AH2. Its pathway is carotenoid biosynthesis; spheroidene biosynthesis. In terms of biological role, catalyzes the introduction of C-3,4 double bonds into 1-hydroxyneurosporene (1-HO-Neu) to yield demethylspheroidene (DMS). The preferred substrates are 1-hydroxy-neurosporene, 1-hydroxy-lycopene and 1,1-dihydroxyneurosporene, however the 3,4-didehydrolycopene derivatives such as 1,1-dihydroxy-3,4-didehydrolycopene, 1-methoxy-1-hydroxy-3,4-didehydrolycopene and 1-hydroxy-3,4-didehydrolycopene are also efficiently converted. 1-HO-carotene derivatives can be also used. The polypeptide is Hydroxyneurosporene desaturase (crtD) (Rubrivivax gelatinosus (Rhodocyclus gelatinosus)).